The chain runs to 909 residues: NADH-quinone oxidoreductase subunit G (909 aa).

The 83-residue stretch at 1-83 folds into the 2Fe-2S ferredoxin-type domain; the sequence is MATIYVDGKE…GTYISIEDEE (83 aa). Positions 34, 45, 48, and 67 each coordinate [2Fe-2S] cluster. The region spanning 83–122 is the 4Fe-4S His(Cys)3-ligated-type domain; the sequence is EAKEFRKCVVEWQMTNHPHDCPVCEEGGACHLQDMTVMTG. [4Fe-4S] cluster is bound by residues His-99, Cys-103, Cys-106, Cys-112, Cys-151, Cys-154, Cys-157, Cys-201, Cys-228, Cys-231, Cys-235, and Cys-263. Residues 221–277 form the 4Fe-4S Mo/W bis-MGD-type domain; it reads MQFAPSICQQCSVGCNISPGERYGELRRIENRFHGSVNHYFLCDRGRFGYGYVNLPD.

Belongs to the complex I 75 kDa subunit family. In terms of assembly, composed of 13 different subunits. Subunits NuoCD, E, F, and G constitute the peripheral sector of the complex. [2Fe-2S] cluster is required as a cofactor. The cofactor is [4Fe-4S] cluster.

It catalyses the reaction a quinone + NADH + 5 H(+)(in) = a quinol + NAD(+) + 4 H(+)(out). Its function is as follows. NDH-1 shuttles electrons from NADH, via FMN and iron-sulfur (Fe-S) centers, to quinones in the respiratory chain. The immediate electron acceptor for the enzyme in this species is believed to be ubiquinone. Couples the redox reaction to proton translocation (for every two electrons transferred, four hydrogen ions are translocated across the cytoplasmic membrane), and thus conserves the redox energy in a proton gradient. In Shewanella oneidensis (strain ATCC 700550 / JCM 31522 / CIP 106686 / LMG 19005 / NCIMB 14063 / MR-1), this protein is NADH-quinone oxidoreductase subunit G (nuoG).